A 253-amino-acid chain; its full sequence is Ubiquinone biosynthesis O-methyltransferase (253 aa).

The S-adenosyl-L-methionine site is built by R47, G78, D99, and M141.

This sequence belongs to the methyltransferase superfamily. UbiG/COQ3 family.

The enzyme catalyses a 3-demethylubiquinol + S-adenosyl-L-methionine = a ubiquinol + S-adenosyl-L-homocysteine + H(+). It catalyses the reaction a 3-(all-trans-polyprenyl)benzene-1,2-diol + S-adenosyl-L-methionine = a 2-methoxy-6-(all-trans-polyprenyl)phenol + S-adenosyl-L-homocysteine + H(+). It participates in cofactor biosynthesis; ubiquinone biosynthesis. In terms of biological role, O-methyltransferase that catalyzes the 2 O-methylation steps in the ubiquinone biosynthetic pathway. The chain is Ubiquinone biosynthesis O-methyltransferase from Rhodopseudomonas palustris (strain ATCC BAA-98 / CGA009).